Reading from the N-terminus, the 600-residue chain is Kynurenine 3-monooxygenase (600 aa).

A disordered region spans residues 217–242; the sequence is GDSCADEPSGCGGRKQATTKSQGSEY.

The protein belongs to the aromatic-ring hydroxylase family. KMO subfamily. It depends on FAD as a cofactor.

The protein localises to the mitochondrion outer membrane. It carries out the reaction L-kynurenine + NADPH + O2 + H(+) = 3-hydroxy-L-kynurenine + NADP(+) + H2O. It functions in the pathway cofactor biosynthesis; NAD(+) biosynthesis; quinolinate from L-kynurenine: step 1/3. Catalyzes the hydroxylation of L-kynurenine (L-Kyn) to form 3-hydroxy-L-kynurenine (L-3OHKyn). Required for synthesis of quinolinic acid. The chain is Kynurenine 3-monooxygenase from Mycosarcoma maydis (Corn smut fungus).